The following is a 1040-amino-acid chain: Multidrug resistance protein MdtB (1040 aa).

12 helical membrane-spanning segments follow: residues 16–36 (FIMRPVATTLLMVAILLAGII), 342–362 (DTQFELMLAIALVVMIIYLFL), 369–389 (IIPGVAVPLSLVGTFAVMVFL), 396–416 (LTLMALTIATGFVVDDAIVVI), 440–460 (IGFTIISLTFSLIAVLIPLLF), 472–492 (FAVTLAVAILISAVVSLTLTP), 537–557 (WLTLGVALSTLALSIILWVFI), 863–883 (LGSTVWLVVAAVVAMYIVLGV), 888–908 (FIHPITILSTLPTAGVGALLA), 911–931 (LAGSELDVIAIIGIILLIGIV), 968–988 (ILMTTLAALLGALPLMLSTGV), and 998–1018 (IGMVGGLMLSQVLTLFTTPVI).

This sequence belongs to the resistance-nodulation-cell division (RND) (TC 2.A.6) family. MdtB subfamily. In terms of assembly, part of a tripartite efflux system composed of MdtA, MdtB and MdtC. MdtB forms a heteromultimer with MdtC.

It is found in the cell inner membrane. This is Multidrug resistance protein MdtB from Klebsiella pneumoniae subsp. pneumoniae (strain ATCC 700721 / MGH 78578).